The following is a 419-amino-acid chain: Carbohydrate sulfotransferase 12 (419 aa).

The Cytoplasmic segment spans residues 1–5 (MTKPR). A helical; Signal-anchor for type II membrane protein membrane pass occupies residues 6–26 (LFRLWLVLGSALMILLIIVYW). At 27–419 (DNVGTAHFYL…YPKPENLLRD (393 aa)) the chain is on the lumenal side. The segment covering 78–87 (HNDLSRRKTE) has biased composition (basic and acidic residues). The interval 78–99 (HNDLSRRKTEQPPVPAPSKPVL) is disordered. Asn-139 carries N-linked (GlcNAc...) asparagine glycosylation. 176–182 (PKVACTN) provides a ligand contact to 3'-phosphoadenylyl sulfate. Asn-214 carries an N-linked (GlcNAc...) asparagine glycan. Residue 250–258 (RDPFVRLIS) participates in 3'-phosphoadenylyl sulfate binding. 2 N-linked (GlcNAc...) asparagine glycosylation sites follow: Asn-285 and Asn-375.

The protein belongs to the sulfotransferase 2 family.

Its subcellular location is the golgi apparatus membrane. The catalysed reaction is chondroitin beta-D-glucuronate + n 3'-phosphoadenylyl sulfate = chondroitin 4'-sulfate + n adenosine 3',5'-bisphosphate + n H(+). In terms of biological role, catalyzes the transfer of sulfate to position 4 of the N-acetylgalactosamine (GalNAc) residue of chondroitin and desulfated dermatan sulfate. Chondroitin sulfate constitutes the predominant proteoglycan present in cartilage and is distributed on the surfaces of many cells and extracellular matrices. Activity toward partially desulfated dermatan sulfate is however lower. Does not form 4, 6-di-O-sulfated GalNAc when chondroitin sulfate C is used as an acceptor. In Mus musculus (Mouse), this protein is Carbohydrate sulfotransferase 12 (Chst12).